The primary structure comprises 87 residues: Putative regulatory protein BCG9842_B1272 (87 aa).

It belongs to the RemA family.

The sequence is that of Putative regulatory protein BCG9842_B1272 from Bacillus cereus (strain G9842).